Consider the following 185-residue polypeptide: Pericyclase pydY (185 aa).

Belongs to the pericyclase pydY family.

It functions in the pathway mycotoxin biosynthesis. In terms of biological role, pericyclase; part of the gene cluster that mediates the biosynthesis of pyrrocidines, fungal natural products containing a macrocyclic para-cyclophane connected to a decahydrofluorene ring system that show potent antibiotic activities toward Gram-negative bacteria. Within the pathway, pydY is involved in the late Diels-Alder cycloaddition step that leads to the formation of the decahydrofluorene core. The pathway begins with the PKS-NRPS pydA which, with the help of the trans-enoyl reductase pydC, synthesizes the polyketide-tyrosyl acyl thioester product which can be reductively off-loaded by the terminal reductase (R) domain in pydA. The alpha/beta hydrolase pydG is then required to catalyze the subsequent Knoevenagel condensation that affords the 3-pyrrolin-2-one ring, whereas the four proteins pydB, pydE, pydX and pydZ then function synergistically to form the cyclophane. PydB and the membrane-bound pydX and pydZ are lipid-binding proteins that can sequester and mold the pdyG product into the inverse S-shape. Binding of the medium chain reductase pydE to the complex would trigger the cascade oxidative cyclization. PydY is involved in the Diels-Alder cycloaddition that forms the decahydrofluorene core. Additional non-enzymatic hydroxylation yields pyrrocidine A2 which can be further reduced into pyrrocidine B by an endogenous reductase. The chain is Pericyclase pydY from Acremonium sp.